A 446-amino-acid polypeptide reads, in one-letter code: NADH-quinone oxidoreductase subunit D (446 aa).

Belongs to the complex I 49 kDa subunit family. In terms of assembly, NDH-1 is composed of 14 different subunits. Subunits NuoB, C, D, E, F, and G constitute the peripheral sector of the complex.

Its subcellular location is the cell membrane. It carries out the reaction a quinone + NADH + 5 H(+)(in) = a quinol + NAD(+) + 4 H(+)(out). Functionally, NDH-1 shuttles electrons from NADH, via FMN and iron-sulfur (Fe-S) centers, to quinones in the respiratory chain. The immediate electron acceptor for the enzyme in this species is believed to be a menaquinone. Couples the redox reaction to proton translocation (for every two electrons transferred, four hydrogen ions are translocated across the cytoplasmic membrane), and thus conserves the redox energy in a proton gradient. The protein is NADH-quinone oxidoreductase subunit D of Nocardioides sp. (strain ATCC BAA-499 / JS614).